The chain runs to 365 residues: Caffeic acid 3-O-methyltransferase 1 (365 aa).

Residue 130 to 136 (MNQDKVL) coordinates substrate. Positions 162 to 180 (AFEYHGTDPRFNKVFNKGM) are substrate binding. S-adenosyl-L-methionine-binding residues include Gly208, Asp231, Asp251, Met252, and Lys265. The Proton acceptor role is filled by His269.

This sequence belongs to the class I-like SAM-binding methyltransferase superfamily. Cation-independent O-methyltransferase family. COMT subfamily. In terms of assembly, homodimer. Post-translationally, the N-terminus is blocked. Xylem.

It carries out the reaction (E)-caffeate + S-adenosyl-L-methionine = (E)-ferulate + S-adenosyl-L-homocysteine + H(+). It functions in the pathway aromatic compound metabolism; phenylpropanoid biosynthesis. In terms of biological role, catalyzes the conversion of caffeic acid to ferulic acid and of 5-hydroxyferulic acid to sinapic acid. The resulting products may subsequently be converted to the corresponding alcohols that are incorporated into lignins. This Populus tremuloides (Quaking aspen) protein is Caffeic acid 3-O-methyltransferase 1 (OMT1).